A 218-amino-acid chain; its full sequence is Putative receptor like protein 25 (218 aa).

Topologically, residues 1-178 are extracellular; sequence MIYTKNAYGS…QEDAKVLNWK (178 aa). 4 LRR repeats span residues 34 to 58, 59 to 82, 83 to 106, and 108 to 131; these read LTLY…IGLL, KALI…MANL, IELE…LKTL, and FLGY…QITG. A glycan (N-linked (GlcNAc...) asparagine) is linked at N65. N113 is a glycosylation site (N-linked (GlcNAc...) asparagine). Residues 179 to 199 traverse the membrane as a helical segment; the sequence is AVATGYGPGVFFGLAIAQIIA. Over 200-218 the chain is Cytoplasmic; the sequence is SYKPEWLVKIIGPNKRRNH.

The protein belongs to the RLP family.

It localises to the cell membrane. This Arabidopsis thaliana (Mouse-ear cress) protein is Putative receptor like protein 25.